A 73-amino-acid chain; its full sequence is uncharacterized protein (73 aa).

Residues 37-57 traverse the membrane as a helical segment; sequence AIIITVAVVAFGALTLGAIGA.

The protein resides in the membrane. This is an uncharacterized protein from Natronomonas pharaonis (strain ATCC 35678 / DSM 2160 / CIP 103997 / JCM 8858 / NBRC 14720 / NCIMB 2260 / Gabara) (Halobacterium pharaonis).